A 103-amino-acid chain; its full sequence is Large ribosomal subunit protein bL21 (103 aa).

This sequence belongs to the bacterial ribosomal protein bL21 family. As to quaternary structure, part of the 50S ribosomal subunit. Contacts protein L20.

Its function is as follows. This protein binds to 23S rRNA in the presence of protein L20. The polypeptide is Large ribosomal subunit protein bL21 (Aliivibrio salmonicida (strain LFI1238) (Vibrio salmonicida (strain LFI1238))).